Here is a 242-residue protein sequence, read N- to C-terminus: MTTVSMRDMLQAGVHFGHQTRYWNPKMKPFIFGARNGVHIINLEHTVPMFNEALAFISNVASKKGKVLFVGTKRAAGEAIKEAAISCDQYYVDHRWLGGMLTNWKTVRQSIKRLKELESQSVDGTFDKLTKKEALMRTRELEKLEKSLGGIKNMGGLPDVLFVIGADHEHIAIKEANNLGIPVVAVVDTNSAPDGVNYIVPGNDDAMRAIRLYTTSVAAAAKAGRGQDLAVQAEQDGFVEAE.

This sequence belongs to the universal ribosomal protein uS2 family.

In Shewanella putrefaciens (strain CN-32 / ATCC BAA-453), this protein is Small ribosomal subunit protein uS2.